Consider the following 549-residue polypeptide: Glucose-6-phosphate isomerase (549 aa).

The active-site Proton donor is Glu353. Residues His384 and Lys513 contribute to the active site.

It belongs to the GPI family.

Its subcellular location is the cytoplasm. It catalyses the reaction alpha-D-glucose 6-phosphate = beta-D-fructose 6-phosphate. The protein operates within carbohydrate biosynthesis; gluconeogenesis. It participates in carbohydrate degradation; glycolysis; D-glyceraldehyde 3-phosphate and glycerone phosphate from D-glucose: step 2/4. In terms of biological role, catalyzes the reversible isomerization of glucose-6-phosphate to fructose-6-phosphate. The protein is Glucose-6-phosphate isomerase of Brucella melitensis biotype 2 (strain ATCC 23457).